A 382-amino-acid polypeptide reads, in one-letter code: Alkanesulfonate monooxygenase (382 aa).

This sequence belongs to the SsuD family.

It carries out the reaction an alkanesulfonate + FMNH2 + O2 = an aldehyde + FMN + sulfite + H2O + 2 H(+). Catalyzes the desulfonation of aliphatic sulfonates. The sequence is that of Alkanesulfonate monooxygenase from Pseudomonas entomophila (strain L48).